Consider the following 459-residue polypeptide: Argininosuccinate lyase (459 aa).

Belongs to the lyase 1 family. Argininosuccinate lyase subfamily.

It is found in the cytoplasm. It catalyses the reaction 2-(N(omega)-L-arginino)succinate = fumarate + L-arginine. Its pathway is amino-acid biosynthesis; L-arginine biosynthesis; L-arginine from L-ornithine and carbamoyl phosphate: step 3/3. The sequence is that of Argininosuccinate lyase from Chromobacterium violaceum (strain ATCC 12472 / DSM 30191 / JCM 1249 / CCUG 213 / NBRC 12614 / NCIMB 9131 / NCTC 9757 / MK).